The following is a 330-amino-acid chain: Free fatty acid receptor 2 (330 aa).

Over M1–M12 the chain is Extracellular. A helical transmembrane segment spans residues A13–V33. The Cytoplasmic segment spans residues G34–P41. A helical membrane pass occupies residues A42–L62. Residues P63–L84 lie on the Extracellular side of the membrane. The helical transmembrane segment at T85–I105 threads the bilayer. The Cytoplasmic portion of the chain corresponds to E106 to G126. The helical transmembrane segment at V127–V147 threads the bilayer. Topologically, residues Q148–L173 are extracellular. N151 and N167 each carry an N-linked (GlcNAc...) asparagine glycan. The helical transmembrane segment at D174–V194 threads the bilayer. The Cytoplasmic portion of the chain corresponds to T195–R219. A helical transmembrane segment spans residues A220–V240. Residues S241 to R255 are Extracellular-facing. A helical transmembrane segment spans residues S256–S276. Topologically, residues S277–E330 are cytoplasmic. Positions L299–E330 are disordered. The span at R302 to G315 shows a compositional bias: basic and acidic residues.

Belongs to the G-protein coupled receptor 1 family. In terms of assembly, interacts with FCN1 (via Fibrinogen C-terminal domain). Expressed at relatively high levels in peripheral blood leukocytes and, to lesser extent, in spleen.

It localises to the cell membrane. Its function is as follows. G protein-coupled receptor that is activated by a major product of dietary fiber digestion, the short chain fatty acids (SCFAs), and that plays a role in the regulation of whole-body energy homeostasis and in intestinal immunity. In omnivorous mammals, the short chain fatty acids acetate, propionate and butyrate are produced primarily by the gut microbiome that metabolizes dietary fibers. SCFAs serve as a source of energy but also act as signaling molecules. That G protein-coupled receptor is probably coupled to the pertussis toxin-sensitive, G(i/o)-alpha family of G proteins but also to the Gq family. Its activation results in the formation of inositol 1,4,5-trisphosphate, the mobilization of intracellular calcium, the phosphorylation of the MAPK3/ERK1 and MAPK1/ERK2 kinases and the inhibition of intracellular cAMP accumulation. May play a role in glucose homeostasis by regulating the secretion of GLP-1, in response to short-chain fatty acids accumulating in the intestine. May also regulate the production of LEP/Leptin, a hormone acting on the central nervous system to inhibit food intake. Finally, may also regulate whole-body energy homeostasis through adipogenesis regulating both differentiation and lipid storage of adipocytes. In parallel to its role in energy homeostasis, may also mediate the activation of the inflammatory and immune responses by SCFA in the intestine, regulating the rapid production of chemokines and cytokines. May also play a role in the resolution of the inflammatory response and control chemotaxis in neutrophils. In addition to SCFAs, may also be activated by the extracellular lectin FCN1 in a process leading to activation of monocytes and inducing the secretion of interleukin-8/IL-8 in response to the presence of microbes. Among SCFAs, the fatty acids containing less than 6 carbons, the most potent activators are probably acetate, propionate and butyrate. Exhibits a SCFA-independent constitutive G protein-coupled receptor activity. This is Free fatty acid receptor 2 (FFAR2) from Homo sapiens (Human).